Reading from the N-terminus, the 628-residue chain is MMTYDFEYDVIVVGAGHAGCEAALAAARMGCRTLLLTINLDAIALMSCNPSIGGLAKGHLVKEIDALGGEMARNIDATGIQFRILNTRKGPAVRASRAQADKQLYRLRMKRVLENQDNLHLKQGEVTALYCDGSVVRGVDTRSGIRFLGKTVVLTTGTFMRGLIHIGLTHYEGGRAGDLPSIGLSDQLKQLGLQVGRLKTGTPARLDGRTIDFSRLEPQHGDNPPQPFSFSTERITMRQVPCHIAYTNERSHDIIRSGLDRSPLYAGIIEGIGPRYCPSIEDKVVRFPDKDRHQAFIEPEGLDTVEMYPSGMSTSLPIDIQIAFYRSMEGLERVEIMRPAYGIEYDYVDPIQLHTSLETKAITNLYHAGQINGTSGYEEAAGQGIVAGINAALRTRGEEPLILSRSESYIGVMIDDLITLGTKEPYRMFTSRAEYRLLLREDNADQRLREIGYRVGLVSDAEYEGYLRKRDMIQAERERLAATRISMSQAEEEYFTARGLPDLQKGTSYEQLLRRPEITYDDLLSFDTVSRETPSVVREQVEIQIKYQGYIERQLEQIRRSAKLENTPLPTDMDYAAINGLTTEVKEKLTKVRPDTLGQASRIPGVTPAAVSVLSIALKAHAGARKQG.

Residues G14 to G19, V126, and S181 each bind FAD. G273 to F287 is an NAD(+) binding site. Q370 contributes to the FAD binding site.

This sequence belongs to the MnmG family. Homodimer. Heterotetramer of two MnmE and two MnmG subunits. FAD is required as a cofactor.

Its subcellular location is the cytoplasm. Its function is as follows. NAD-binding protein involved in the addition of a carboxymethylaminomethyl (cmnm) group at the wobble position (U34) of certain tRNAs, forming tRNA-cmnm(5)s(2)U34. The chain is tRNA uridine 5-carboxymethylaminomethyl modification enzyme MnmG from Pelobacter propionicus (strain DSM 2379 / NBRC 103807 / OttBd1).